Consider the following 95-residue polypeptide: FMRFamide-like neuropeptides 16 (95 aa).

The N-terminal stretch at 1–24 (MSLSGFEFSSIIAVLLLLIQLSSA) is a signal peptide. Residues 25–58 (AVLPVDYASQYGVASADEMTALPEEGSLFAERPA) constitute a propeptide that is removed on maturation. Phe67, Phe77, and Phe87 each carry phenylalanine amide. Positions 90–95 (SAPFEQ) are excised as a propeptide.

The protein belongs to the FARP (FMRFamide related peptide) family.

It localises to the secreted. Its function is as follows. FMRFamides and FMRFamide-like peptides are neuropeptides. AQTFVRF-amide inhibits the activity of dissected pharyngeal myogenic muscle system. This is FMRFamide-like neuropeptides 16 (flp-16) from Caenorhabditis briggsae.